Reading from the N-terminus, the 441-residue chain is ATP-dependent protease ATPase subunit HslU (441 aa).

ATP-binding positions include Ile18, 60 to 65 (GVGKTE), Asp254, Glu319, and Arg391.

It belongs to the ClpX chaperone family. HslU subfamily. In terms of assembly, a double ring-shaped homohexamer of HslV is capped on each side by a ring-shaped HslU homohexamer. The assembly of the HslU/HslV complex is dependent on binding of ATP.

It localises to the cytoplasm. In terms of biological role, ATPase subunit of a proteasome-like degradation complex; this subunit has chaperone activity. The binding of ATP and its subsequent hydrolysis by HslU are essential for unfolding of protein substrates subsequently hydrolyzed by HslV. HslU recognizes the N-terminal part of its protein substrates and unfolds these before they are guided to HslV for hydrolysis. This is ATP-dependent protease ATPase subunit HslU from Shewanella woodyi (strain ATCC 51908 / MS32).